A 782-amino-acid chain; its full sequence is DNA repair and recombination protein RAD54-like (782 aa).

The span at 1 to 20 (MRRSLAPSQRGGQRLSSRND) shows a compositional bias: polar residues. Positions 1 to 28 (MRRSLAPSQRGGQRLSSRNDFTPPLLKK) are disordered. The tract at residues 2 to 9 (RRSLAPSQ) is required for chromatin remodeling, strand pairing activities and coupling of ATPase activity. Phosphothreonine is present on Thr22. One can recognise a Helicase ATP-binding domain in the interval 168-343 (EGKRGNFNGC…FSLVNFVNPE (176 aa)). 181 to 188 (DEMGLGKT) is an ATP binding site. Positions 294-297 (DEGH) match the DEGH box motif. In terms of domain architecture, Helicase C-terminal spans 501 to 658 (LLDFMLAAIR…NNESAEKHFT (158 aa)). Polar residues predominate over residues 741–753 (SQKIETTPATETS). The tract at residues 741 to 782 (SQKIETTPATETSVEAKPEPERRKRPAMPLSDDSADEDFQGF) is disordered. Residues 773–782 (DSADEDFQGF) are compositionally biased toward acidic residues.

The protein belongs to the SNF2/RAD54 helicase family. Interacts (via N-terminus) with spn-A/Rad51.

Its subcellular location is the nucleus. In terms of biological role, involved in mitotic DNA repair and meiotic recombination. Functions in the recombinational DNA repair pathway. Essential for interhomolog gene conversion (GC), but may have a less important role in intersister GC than spn-A/Rad51. In the presence of DNA, spn-A/Rad51 enhances the ATPase activity of okr/Rad54. The polypeptide is DNA repair and recombination protein RAD54-like (Drosophila pseudoobscura pseudoobscura (Fruit fly)).